The chain runs to 1341 residues: WD repeat-containing protein 19 (1341 aa).

6 WD repeats span residues 11–51 (SWLG…RSEI), 52–92 (SLPG…TSQL), 95–134 (GMRDQMSFLLWSKIGSFLAVGTIKGNLLIYNHQTSRKIPV), 137–175 (KHTKKITCGCWNSENLLALGGEDKMITVSNQEGDTIRQT), 273–311 (DHKDNLTSVALSQTLNKAATCGDNCIKIHDLTELRDMYA), and 317–356 (DENKGLGTLSWTDDGQLLALSTQRGSLHVFLTKLPILGDA). TPR repeat units follow at residues 736–769 (AQDLYLASNCPVAALEMRRDLQHWDSALQLAKRL), 775–808 (PFISKEYAIQLEFTGDYVNALAHYEKGITGDNKE), 840–873 (RVLKRDCGAILENMKQFSEAAQLYEKGQYYDRAA), 895–928 (PKIHLQYAKAKEADGRYKEAVVAYENAKQWNSVI), 951–984 (LDGAKMVARFFLQLGDYGSAIQFLVLSKCNNEAF), and 1020–1053 (EKRHFQAGKFFLLCGQYSRALKHFLKCPSSEDNV).

As to quaternary structure, component of the IFT complex A (IFT-A) complex. IFT-A complex is divided into a core subcomplex composed of IFT122:IFT140:WDR19 which is associated with TULP3 and a peripheral subcomplex composed of IFT43:WDR35:TTC21B. Interacts (via C-terminal region) with IFT122 (via C-terminal region). Interacts with BBS1. Interacts with TTC25. In terms of tissue distribution, tissue-specific expression of isoforms. Expressed in the prostate, testis, epididymis, submaxillary and salivary glands. Expressed in ependymal cells lining brain ventricles (at protein level).

The protein resides in the cell projection. It localises to the cilium. It is found in the cytoplasm. Its subcellular location is the cytoskeleton. The protein localises to the cilium basal body. The protein resides in the photoreceptor outer segment. It localises to the flagellum. Its function is as follows. As component of the IFT complex A (IFT-A), a complex required for retrograde ciliary transport and entry into cilia of G protein-coupled receptors (GPCRs), it is involved in cilia function and/or assembly. Essential for functional IFT-A assembly and ciliary entry of GPCRs. Associates with the BBSome complex to mediate ciliary transport. The chain is WD repeat-containing protein 19 from Mus musculus (Mouse).